We begin with the raw amino-acid sequence, 253 residues long: Nurim homolog (253 aa).

Residues 1-2 lie on the Nuclear side of the membrane; that stretch reads MA. The helical transmembrane segment at 3–30 threads the bilayer; the sequence is TFAKVMLLLSSVATFGYTFFVVGKLMLF. Residues 31 to 56 lie on the Perinuclear space side of the membrane; sequence LSTPRSISKAHTWIFNLLDNKSRLET. The helical transmembrane segment at 57–78 threads the bilayer; that stretch reads AYGPIVFDTLYLIGFIFQHSFL. The Nuclear portion of the chain corresponds to 79–96; that stretch reads KSALVKNLWRKLGLAAAE. Residues 97 to 113 traverse the membrane as a helical segment; the sequence is RTIYSLTSSICLHYLLK. At 114–132 the chain is on the perinuclear space side; the sequence is NWLPAQSIVLWQVDVDESA. Residues 133 to 161 form a helical membrane-spanning segment; it reads PLWWTFVVTHGLGWAVIFGGSLIMDLPEL. Residues 162–188 are Nuclear-facing; that stretch reads LGVKQVYYDLKEYGEPVAYKSSELRNL. The helical transmembrane segment at 189–207 threads the bilayer; the sequence is YSHVRHPSFVGLSVILFAT. The Perinuclear space portion of the chain corresponds to 208–213; the sequence is NVMSLD. The chain crosses the membrane as a helical span at residues 214–231; it reads RLLLASLLTVYMYVAWST. Residues 232 to 253 are Nuclear-facing; sequence DDKDVAYQKQQLRNKKHELKAQ.

Belongs to the nurim family.

It localises to the nucleus inner membrane. In Drosophila pseudoobscura pseudoobscura (Fruit fly), this protein is Nurim homolog (nrm).